Reading from the N-terminus, the 66-residue chain is Small ribosomal subunit protein bS21 (66 aa).

The protein belongs to the bacterial ribosomal protein bS21 family.

This Maridesulfovibrio salexigens (strain ATCC 14822 / DSM 2638 / NCIMB 8403 / VKM B-1763) (Desulfovibrio salexigens) protein is Small ribosomal subunit protein bS21.